Here is a 334-residue protein sequence, read N- to C-terminus: Trans-3-hydroxy-L-proline dehydratase (334 aa).

The Proton acceptor role is filled by cysteine 91. Residues 92-93, aspartate 250, and 255-256 each bind substrate; these read GH and GT.

Belongs to the proline racemase family.

It catalyses the reaction trans-3-hydroxy-L-proline = 1-pyrroline-2-carboxylate + H2O. Catalyzes the dehydration of trans-3-hydroxy-L-proline (t3LHyp) to Delta(1)-pyrroline-2-carboxylate (Pyr2C). Is likely involved in a degradation pathway that converts t3LHyp to L-proline. Can also catalyze the epimerization of trans-4-hydroxy-L-proline (t4LHyp) to cis-4-hydroxy-D-proline (c4DHyp) in vitro. Displays no proline racemase activity. This Bacillus thuringiensis subsp. konkukian (strain 97-27) protein is Trans-3-hydroxy-L-proline dehydratase.